The primary structure comprises 463 residues: tRNA-2-methylthio-N(6)-dimethylallyladenosine synthase (463 aa).

The 119-residue stretch at 18 to 136 (RKLYIETYGC…LPNLVGAAEQ (119 aa)) folds into the MTTase N-terminal domain. Positions 27, 63, 100, 174, 178, and 181 each coordinate [4Fe-4S] cluster. The Radical SAM core domain occupies 160 to 392 (GGVHINGFVS…IALQNRLSEE (233 aa)). Residues 395 to 458 (KRDIGKTFEV…SATLFGEVVE (64 aa)) form the TRAM domain.

The protein belongs to the methylthiotransferase family. MiaB subfamily. In terms of assembly, monomer. The cofactor is [4Fe-4S] cluster.

Its subcellular location is the cytoplasm. It carries out the reaction N(6)-dimethylallyladenosine(37) in tRNA + (sulfur carrier)-SH + AH2 + 2 S-adenosyl-L-methionine = 2-methylsulfanyl-N(6)-dimethylallyladenosine(37) in tRNA + (sulfur carrier)-H + 5'-deoxyadenosine + L-methionine + A + S-adenosyl-L-homocysteine + 2 H(+). Functionally, catalyzes the methylthiolation of N6-(dimethylallyl)adenosine (i(6)A), leading to the formation of 2-methylthio-N6-(dimethylallyl)adenosine (ms(2)i(6)A) at position 37 in tRNAs that read codons beginning with uridine. The protein is tRNA-2-methylthio-N(6)-dimethylallyladenosine synthase of Porphyromonas gingivalis (strain ATCC BAA-308 / W83).